The following is a 90-amino-acid chain: Acylphosphatase (90 aa).

The region spanning 3–90 is the Acylphosphatase-like domain; it reads HYHAIITGRV…AHYQDFRIKG (88 aa). Active-site residues include Arg-18 and Asn-36.

The protein belongs to the acylphosphatase family.

It catalyses the reaction an acyl phosphate + H2O = a carboxylate + phosphate + H(+). The sequence is that of Acylphosphatase (acyP) from Bacillus pumilus (strain SAFR-032).